A 389-amino-acid polypeptide reads, in one-letter code: Putative cyclin-F3-1 (389 aa).

Residues 1-103 (MEAAAAAAAE…GAAGGSRQPV (103 aa)) are disordered. A compositionally biased stretch (low complexity) spans 19–43 (VEGAAVAAVAPEAAAEGPSEPNAGE).

This sequence belongs to the cyclin family. Cyclin F subfamily.

The sequence is that of Putative cyclin-F3-1 (CYCF3-1) from Oryza sativa subsp. japonica (Rice).